The following is a 75-amino-acid chain: Large ribosomal subunit protein bL28c (75 aa).

Belongs to the bacterial ribosomal protein bL28 family.

It is found in the plastid. It localises to the chloroplast. The chain is Large ribosomal subunit protein bL28c from Cyanidioschyzon merolae (strain NIES-3377 / 10D) (Unicellular red alga).